Reading from the N-terminus, the 197-residue chain is Small ribosomal subunit protein uS11m (197 aa).

Residues 43-52 (AAKEEVEKAE) are compositionally biased toward basic and acidic residues. Residues 43 to 66 (AAKEEVEKAETPAPAPSRSSFSIY) are disordered.

The protein belongs to the universal ribosomal protein uS11 family. Component of the mitochondrial ribosome small subunit (28S) which comprises a 12S rRNA and about 30 distinct proteins.

It is found in the mitochondrion. The polypeptide is Small ribosomal subunit protein uS11m (MRPS11) (Bos taurus (Bovine)).